A 223-amino-acid polypeptide reads, in one-letter code: Pre-mRNA-splicing factor SPF27 (223 aa).

A coiled-coil region spans residues 139–223 (NENLLHMIDC…GENKENIEDY (85 aa)).

It belongs to the SPF27 family. In terms of assembly, component of the pre-catalytic and catalytic spliceosome complexes. Component of the postcatalytic spliceosome P complex.

It localises to the nucleus. Its function is as follows. Required for pre-mRNA splicing as component of the activated spliceosome. May have a scaffolding role in the spliceosome assembly as it contacts all other components of the core complex. In Xenopus tropicalis (Western clawed frog), this protein is Pre-mRNA-splicing factor SPF27 (bcas2).